The sequence spans 143 residues: Deoxyuridine 5'-triphosphate nucleotidohydrolase (143 aa).

Belongs to the dUTPase family. Requires Mg(2+) as cofactor.

It carries out the reaction dUTP + H2O = dUMP + diphosphate + H(+). This enzyme is involved in nucleotide metabolism: it produces dUMP, the immediate precursor of thymidine nucleotides and it decreases the intracellular concentration of dUTP so that uracil cannot be incorporated into DNA. The polypeptide is Deoxyuridine 5'-triphosphate nucleotidohydrolase (DUT) (Yaba monkey tumor virus (strain VR587) (YMTV)).